We begin with the raw amino-acid sequence, 353 residues long: Histidinol-phosphate aminotransferase (353 aa).

Lys-218 bears the N6-(pyridoxal phosphate)lysine mark.

Belongs to the class-II pyridoxal-phosphate-dependent aminotransferase family. Histidinol-phosphate aminotransferase subfamily. As to quaternary structure, homodimer. The cofactor is pyridoxal 5'-phosphate.

It catalyses the reaction L-histidinol phosphate + 2-oxoglutarate = 3-(imidazol-4-yl)-2-oxopropyl phosphate + L-glutamate. It functions in the pathway amino-acid biosynthesis; L-histidine biosynthesis; L-histidine from 5-phospho-alpha-D-ribose 1-diphosphate: step 7/9. The chain is Histidinol-phosphate aminotransferase from Synechococcus sp. (strain JA-3-3Ab) (Cyanobacteria bacterium Yellowstone A-Prime).